The chain runs to 306 residues: Cysteine synthase (306 aa).

K46 carries the N6-(pyridoxal phosphate)lysine modification. Residues N76, 180 to 184 (GSGGT), and S267 each bind pyridoxal 5'-phosphate.

Belongs to the cysteine synthase/cystathionine beta-synthase family. As to quaternary structure, homodimer. It depends on pyridoxal 5'-phosphate as a cofactor.

The enzyme catalyses O-acetyl-L-serine + hydrogen sulfide = L-cysteine + acetate. It participates in amino-acid biosynthesis; L-cysteine biosynthesis; L-cysteine from L-serine: step 2/2. The chain is Cysteine synthase (cysM) from Helicobacter pylori (strain ATCC 700392 / 26695) (Campylobacter pylori).